Consider the following 550-residue polypeptide: MCHRSHGRSLRPPSPLLLLLPLLLQSPWAAGAAEKHNSAGVHYATAYWLPDTKAVEIKMVLDKKGDAYGFYNDSIQTTGWGVLEIKAGYGSQILSNEIIMFLAGYLEGYLTALHMYDHFTNLYPQLIKNPSIVKKVQDFMEKQELWTRKNIKDQKDDPFWRHTGYVVSQLDGMYLGAQKRASEEEMKPMTMFQIQFLNAVGDLLDLIPSLSPTKSSSLKKFKIWEMGHCSALIKVLPGFENIYFAHSSWYTYAAMLRIYKHWDFNIKDKYTASNRLSFSSYPGFLESLDDFYILSSGLILLQTTNSVYNKTLLKLVVPESLLAWQRVRVANMMAQGGKEWSQLFSMYNSGTYNNQYMVLDLKKVTLKKSIDRGALYVVEQIPTYVEYSDQTNILRKGYWASYNIPFHKTVYNWSGYPLLVHKLGLDYSYDLAPRAKIFRRDQGTVTDMASMKHIMRYNNYKVDPYSKGDPCSTICCREDLNEASPSPGGCYDTKVADIFLASQYKAYAISGPTVQNGLPPFNWNRFNDTLHQGMPDVFDFDFVTMKPILT.

The N-terminal stretch at 1-39 (MCHRSHGRSLRPPSPLLLLLPLLLQSPWAAGAAEKHNSA) is a signal peptide. Asparagine 72 carries N-linked (GlcNAc...) (high mannose) asparagine; alternate glycosylation. Residue asparagine 72 is glycosylated (N-linked (GlcNAc...) (hybrid) asparagine; alternate). The propeptide at 210 to 228 (LSPTKSSSLKKFKIWEMGH) is removed in mature form. Asparagine 309 and asparagine 412 each carry an N-linked (GlcNAc...) (high mannose) asparagine; alternate glycan. Residues asparagine 309 and asparagine 412 are each glycosylated (N-linked (GlcNAc...) (hybrid) asparagine; alternate). Intrachain disulfides connect cysteine 471-cysteine 476 and cysteine 475-cysteine 490. The N-linked (GlcNAc...) (high mannose) asparagine; alternate glycan is linked to asparagine 527. N-linked (GlcNAc...) (hybrid) asparagine; alternate glycosylation occurs at asparagine 527.

Belongs to the phospholipase B-like family. In terms of assembly, may form a homodimer, each monomer is composed of a chain A and a chain B. The maturation cleavages that produces chains A and B are required to open the putative substrate binding pocket. Both chains A and B remain associated in the mature protein.

The protein localises to the lysosome. Its function is as follows. Exhibits weak phospholipase activity, acting on various phospholipids, including phosphatidylcholine, phosphatidylinositol, phosphatidylethanolamine and lysophospholipids. However, in view of the small size of the putative binding pocket, it has been proposed that it may act rather as an amidase or a peptidase. The polypeptide is Phospholipase B-like 1 (Plbd1) (Rattus norvegicus (Rat)).